We begin with the raw amino-acid sequence, 275 residues long: N-(5'-phosphoribosyl)anthranilate isomerase 2, chloroplastic (275 aa).

Residues 1–32 (MSTGISTDLHVHFGALNFSKTYKSGLSNRTVS) constitute a chloroplast transit peptide.

This sequence belongs to the TrpF family. In terms of tissue distribution, expressed in roots and shoots.

The protein resides in the plastid. Its subcellular location is the chloroplast. It carries out the reaction N-(5-phospho-beta-D-ribosyl)anthranilate = 1-(2-carboxyphenylamino)-1-deoxy-D-ribulose 5-phosphate. It participates in amino-acid biosynthesis; L-tryptophan biosynthesis; L-tryptophan from chorismate: step 3/5. In Arabidopsis thaliana (Mouse-ear cress), this protein is N-(5'-phosphoribosyl)anthranilate isomerase 2, chloroplastic (PAI2).